The chain runs to 253 residues: Triosephosphate isomerase (253 aa).

13 to 15 contributes to the substrate binding site; that stretch reads NWK. Catalysis depends on histidine 100, which acts as the Electrophile. The Proton acceptor role is filled by glutamate 169. Substrate contacts are provided by residues glycine 175, serine 208, and 229-230; that span reads GG.

It belongs to the triosephosphate isomerase family. In terms of assembly, homodimer.

It localises to the cytoplasm. It catalyses the reaction D-glyceraldehyde 3-phosphate = dihydroxyacetone phosphate. It functions in the pathway carbohydrate biosynthesis; gluconeogenesis. The protein operates within carbohydrate degradation; glycolysis; D-glyceraldehyde 3-phosphate from glycerone phosphate: step 1/1. In terms of biological role, involved in the gluconeogenesis. Catalyzes stereospecifically the conversion of dihydroxyacetone phosphate (DHAP) to D-glyceraldehyde-3-phosphate (G3P). In Synechococcus sp. (strain RCC307), this protein is Triosephosphate isomerase.